We begin with the raw amino-acid sequence, 63 residues long: Rubredoxin-2 (63 aa).

One can recognise a Rubredoxin-like domain in the interval 8-59 (YKLFRCLQCGFEYDEAIGWPDDGIEPGTRWDEIPEDWSCPDCGAAKVDFEMV). Positions 13, 16, 46, and 49 each coordinate Fe cation.

It belongs to the rubredoxin family. The cofactor is Fe(3+).

Its function is as follows. Involved in the hydrocarbon hydroxylating system, which transfers electrons from NADH to rubredoxin reductase and then through rubredoxin to alkane 1 monooxygenase. The protein is Rubredoxin-2 (rubA2) of Rhodococcus erythropolis (Arthrobacter picolinophilus).